A 152-amino-acid polypeptide reads, in one-letter code: Ribonuclease H (152 aa).

The 142-residue stretch at 4–145 folds into the RNase H type-1 domain; sequence SRSMVEIFSD…CDELARQAIA (142 aa). Asp-13, Glu-51, Asp-73, and Asp-137 together coordinate Mg(2+).

It belongs to the RNase H family. As to quaternary structure, monomer. The cofactor is Mg(2+).

The protein localises to the cytoplasm. The catalysed reaction is Endonucleolytic cleavage to 5'-phosphomonoester.. Functionally, endonuclease that specifically degrades the RNA of RNA-DNA hybrids. This chain is Ribonuclease H, found in Syntrophotalea carbinolica (strain DSM 2380 / NBRC 103641 / GraBd1) (Pelobacter carbinolicus).